Reading from the N-terminus, the 127-residue chain is MLQLLLAVFIGGGTGSVARWLLSMRFNPLHQAIPLGTLAANLIGAFIIGMGFAWFSRMTNIDPVWKVLITTGFCGGLTTFSTFSAEVVFLLQEGRFGWALLNVFVNLLGSFAMTALAFWLFSASTTH.

The next 4 helical transmembrane spans lie at 4–24, 35–55, 71–91, and 103–123; these read LLLAVFIGGGTGSVARWLLSM, LGTLAANLIGAFIIGMGFAWF, TGFCGGLTTFSTFSAEVVFLL, and VFVNLLGSFAMTALAFWLFSA. Positions 75 and 78 each coordinate Na(+).

Belongs to the fluoride channel Fluc/FEX (TC 1.A.43) family.

The protein localises to the cell inner membrane. The enzyme catalyses fluoride(in) = fluoride(out). With respect to regulation, na(+) is not transported, but it plays an essential structural role and its presence is essential for fluoride channel function. In terms of biological role, fluoride-specific ion channel. Important for reducing fluoride concentration in the cell, thus reducing its toxicity. This Escherichia coli O81 (strain ED1a) protein is Fluoride-specific ion channel FluC.